A 403-amino-acid chain; its full sequence is Metacaspase-1 (403 aa).

The disordered stretch occupies residues 1-95 (MFPGSGHNTY…PSGSQSFGQN (95 aa)). Residues 13 to 22 (YPPPQGPPPN) are compositionally biased toward pro residues. Low complexity-rich tracts occupy residues 23-34 (NNGYNSGPNNSY) and 49-62 (QYDQ…QSQP). Catalysis depends on residues His193 and Cys249.

Belongs to the peptidase C14B family.

Its function is as follows. Involved in cell death (apoptosis). The polypeptide is Metacaspase-1 (MCA1) (Scheffersomyces stipitis (strain ATCC 58785 / CBS 6054 / NBRC 10063 / NRRL Y-11545) (Yeast)).